We begin with the raw amino-acid sequence, 489 residues long: Bifunctional protein HldE (489 aa).

Residues 1 to 330 form a ribokinase region; that stretch reads MFDFDGLSNA…RKILPPAFLA (330 aa). 205–208 contributes to the ATP binding site; that stretch reads NRKE. Residue Asp275 is part of the active site. A cytidylyltransferase region spans residues 358–489; that stretch reads FTNGCFDILH…SLVKRAGGRA (132 aa).

It in the N-terminal section; belongs to the carbohydrate kinase PfkB family. In the C-terminal section; belongs to the cytidylyltransferase family. In terms of assembly, homodimer.

The enzyme catalyses D-glycero-beta-D-manno-heptose 7-phosphate + ATP = D-glycero-beta-D-manno-heptose 1,7-bisphosphate + ADP + H(+). The catalysed reaction is D-glycero-beta-D-manno-heptose 1-phosphate + ATP + H(+) = ADP-D-glycero-beta-D-manno-heptose + diphosphate. It participates in nucleotide-sugar biosynthesis; ADP-L-glycero-beta-D-manno-heptose biosynthesis; ADP-L-glycero-beta-D-manno-heptose from D-glycero-beta-D-manno-heptose 7-phosphate: step 1/4. Its pathway is nucleotide-sugar biosynthesis; ADP-L-glycero-beta-D-manno-heptose biosynthesis; ADP-L-glycero-beta-D-manno-heptose from D-glycero-beta-D-manno-heptose 7-phosphate: step 3/4. In terms of biological role, catalyzes the phosphorylation of D-glycero-D-manno-heptose 7-phosphate at the C-1 position to selectively form D-glycero-beta-D-manno-heptose-1,7-bisphosphate. Catalyzes the ADP transfer from ATP to D-glycero-beta-D-manno-heptose 1-phosphate, yielding ADP-D-glycero-beta-D-manno-heptose. This is Bifunctional protein HldE from Nitrobacter hamburgensis (strain DSM 10229 / NCIMB 13809 / X14).